Reading from the N-terminus, the 126-residue chain is MAIRIVGVDLPQNKRGEIALTYIYGIGRSAAKSVLDKAGVDRDIKVKDWTDDQAAKVREVIGAEYKVEGDLRSEVQLNIKRLMDIGCYRGVRHRVGLPLRGQSTKNNARTRKGKKKTVANKKKATK.

A disordered region spans residues 98 to 126; the sequence is PLRGQSTKNNARTRKGKKKTVANKKKATK. A compositionally biased stretch (basic residues) spans 108–126; sequence ARTRKGKKKTVANKKKATK.

Belongs to the universal ribosomal protein uS13 family. In terms of assembly, part of the 30S ribosomal subunit. Forms a loose heterodimer with protein S19. Forms two bridges to the 50S subunit in the 70S ribosome.

Functionally, located at the top of the head of the 30S subunit, it contacts several helices of the 16S rRNA. In the 70S ribosome it contacts the 23S rRNA (bridge B1a) and protein L5 of the 50S subunit (bridge B1b), connecting the 2 subunits; these bridges are implicated in subunit movement. Contacts the tRNAs in the A and P-sites. The sequence is that of Small ribosomal subunit protein uS13 from Parabacteroides distasonis (strain ATCC 8503 / DSM 20701 / CIP 104284 / JCM 5825 / NCTC 11152).